We begin with the raw amino-acid sequence, 288 residues long: Diaminopimelate epimerase (288 aa).

Positions 13, 46, and 66 each coordinate substrate. C75 functions as the Proton donor in the catalytic mechanism. Residues 76 to 77 (GN), N166, N199, and 217 to 218 (ER) contribute to the substrate site. The active-site Proton acceptor is the C226. 227–228 (GT) lines the substrate pocket.

This sequence belongs to the diaminopimelate epimerase family. Homodimer.

The protein resides in the cytoplasm. It carries out the reaction (2S,6S)-2,6-diaminopimelate = meso-2,6-diaminopimelate. The protein operates within amino-acid biosynthesis; L-lysine biosynthesis via DAP pathway; DL-2,6-diaminopimelate from LL-2,6-diaminopimelate: step 1/1. Catalyzes the stereoinversion of LL-2,6-diaminopimelate (L,L-DAP) to meso-diaminopimelate (meso-DAP), a precursor of L-lysine and an essential component of the bacterial peptidoglycan. This Cupriavidus pinatubonensis (strain JMP 134 / LMG 1197) (Cupriavidus necator (strain JMP 134)) protein is Diaminopimelate epimerase.